We begin with the raw amino-acid sequence, 366 residues long: NADH-quinone oxidoreductase subunit D (366 aa).

Belongs to the complex I 49 kDa subunit family. As to quaternary structure, NDH-1 is composed of 14 different subunits. Subunits NuoB, C, D, E, F, and G constitute the peripheral sector of the complex.

It is found in the cell membrane. The enzyme catalyses a quinone + NADH + 5 H(+)(in) = a quinol + NAD(+) + 4 H(+)(out). In terms of biological role, NDH-1 shuttles electrons from NADH, via FMN and iron-sulfur (Fe-S) centers, to quinones in the respiratory chain. The immediate electron acceptor for the enzyme in this species is believed to be a menaquinone. Couples the redox reaction to proton translocation (for every two electrons transferred, four hydrogen ions are translocated across the cytoplasmic membrane), and thus conserves the redox energy in a proton gradient. The chain is NADH-quinone oxidoreductase subunit D from Bacillus mycoides (strain KBAB4) (Bacillus weihenstephanensis).